We begin with the raw amino-acid sequence, 110 residues long: uncharacterized protein (110 aa).

The next 3 helical transmembrane spans lie at 32 to 52 (VLNVVSIAILFETPHRLALVP), 57 to 77 (YTHMAIPLSTCLFCLCLCICI), and 90 to 110 (FLASFFVLILTINDLDVTFVI).

The protein resides in the membrane. May play a role in proper chromosome segregation. Suppresses the high-frequency loss of mini-chromosomes when overexpressed, and this suppression is completely dependent on silencing protein SIR4. This is an uncharacterized protein from Saccharomyces cerevisiae (strain ATCC 204508 / S288c) (Baker's yeast).